The following is a 248-amino-acid chain: Probable transcriptional regulatory protein Msil_2305 (248 aa).

This sequence belongs to the TACO1 family.

The protein resides in the cytoplasm. The chain is Probable transcriptional regulatory protein Msil_2305 from Methylocella silvestris (strain DSM 15510 / CIP 108128 / LMG 27833 / NCIMB 13906 / BL2).